The chain runs to 360 residues: S-adenosylmethionine:tRNA ribosyltransferase-isomerase (360 aa).

The protein belongs to the QueA family. As to quaternary structure, monomer.

It localises to the cytoplasm. The enzyme catalyses 7-aminomethyl-7-carbaguanosine(34) in tRNA + S-adenosyl-L-methionine = epoxyqueuosine(34) in tRNA + adenine + L-methionine + 2 H(+). It functions in the pathway tRNA modification; tRNA-queuosine biosynthesis. Its function is as follows. Transfers and isomerizes the ribose moiety from AdoMet to the 7-aminomethyl group of 7-deazaguanine (preQ1-tRNA) to give epoxyqueuosine (oQ-tRNA). This chain is S-adenosylmethionine:tRNA ribosyltransferase-isomerase, found in Rhizobium meliloti (strain 1021) (Ensifer meliloti).